The chain runs to 43 residues: Photosystem I reaction center subunit IX (43 aa).

The chain crosses the membrane as a helical span at residues 7-27 (YLSTAPVLSTIWFGSLAGLLI).

The protein belongs to the PsaJ family.

It is found in the plastid. It localises to the chloroplast thylakoid membrane. May help in the organization of the PsaE and PsaF subunits. This is Photosystem I reaction center subunit IX from Vitis vinifera (Grape).